The chain runs to 305 residues: Glutaminase (305 aa).

Residues Ser61, Asn113, Glu158, Asn165, Tyr189, Tyr241, and Val259 each contribute to the substrate site.

It belongs to the glutaminase family. In terms of assembly, homotetramer.

The enzyme catalyses L-glutamine + H2O = L-glutamate + NH4(+). This chain is Glutaminase, found in Clostridium botulinum (strain 657 / Type Ba4).